A 246-amino-acid chain; its full sequence is DNA repair protein RecO (246 aa).

The protein belongs to the RecO family.

Its function is as follows. Involved in DNA repair and RecF pathway recombination. This chain is DNA repair protein RecO, found in Marinobacter nauticus (strain ATCC 700491 / DSM 11845 / VT8) (Marinobacter aquaeolei).